Here is a 362-residue protein sequence, read N- to C-terminus: Caveolae-associated protein 4 (362 aa).

The disordered stretch occupies residues Met1–Asp24. Positions Ile100–Lys120 form a coiled coil. Residues Ser152, Ser171, and Ser172 each carry the phosphoserine modification. Residues Pro227–Lys255 show a composition bias toward basic and acidic residues. The tract at residues Pro227–Ala261 is disordered. Tyr324 carries the phosphotyrosine modification. The residue at position 334 (Thr334) is a Phosphothreonine. Position 353 is a phosphoserine (Ser353).

It belongs to the CAVIN family. Component of the CAVIN complex composed of CAVIN1, CAVIN2, CAVIN3 and CAVIN4. Interacts with CAVIN1, CAV3, ADRA1A and ADRA1B. Interacts with CAVIN2; this augments the transactivation of NPPA. Interacts with MAPK1 and MAPK3. In terms of tissue distribution, expressed at much higher levels in cardiomyocytes than in non-cardiomyocytes.

The protein localises to the cytoplasm. The protein resides in the myofibril. Its subcellular location is the sarcomere. It is found in the cytosol. It localises to the cell membrane. The protein localises to the sarcolemma. The protein resides in the membrane. Its subcellular location is the caveola. Functionally, modulates the morphology of formed caveolae in cardiomyocytes, but is not required for caveolar formation. Facilitates the recruitment of MAPK1/3 to caveolae within cardiomyocytes and regulates alpha-1 adrenergic receptor-induced hypertrophic responses in cardiomyocytes through MAPK1/3 activation. Contributes to proper membrane localization and stabilization of caveolin-3 (CAV3) in cardiomyocytes. Induces RHOA activation and activates NPPA transcription and myofibrillar organization through the Rho/ROCK signaling pathway. The protein is Caveolae-associated protein 4 of Rattus norvegicus (Rat).